Consider the following 230-residue polypeptide: Enolase-phosphatase E1 (230 aa).

Belongs to the HAD-like hydrolase superfamily. MasA/MtnC family. Monomer. Mg(2+) serves as cofactor.

It catalyses the reaction 5-methylsulfanyl-2,3-dioxopentyl phosphate + H2O = 1,2-dihydroxy-5-(methylsulfanyl)pent-1-en-3-one + phosphate. It participates in amino-acid biosynthesis; L-methionine biosynthesis via salvage pathway; L-methionine from S-methyl-5-thio-alpha-D-ribose 1-phosphate: step 3/6. The protein operates within amino-acid biosynthesis; L-methionine biosynthesis via salvage pathway; L-methionine from S-methyl-5-thio-alpha-D-ribose 1-phosphate: step 4/6. Functionally, bifunctional enzyme that catalyzes the enolization of 2,3-diketo-5-methylthiopentyl-1-phosphate (DK-MTP-1-P) into the intermediate 2-hydroxy-3-keto-5-methylthiopentenyl-1-phosphate (HK-MTPenyl-1-P), which is then dephosphorylated to form the acireductone 1,2-dihydroxy-3-keto-5-methylthiopentene (DHK-MTPene). The polypeptide is Enolase-phosphatase E1 (Sulfurihydrogenibium sp. (strain YO3AOP1)).